The primary structure comprises 264 residues: Short-chain dehydrogenase/reductase ucsE (264 aa).

The helical transmembrane segment at 13-32 (LVVVVGGTSGLGFAVAQAAV) threads the bilayer. Residues Leu-23, Ser-43, and Asp-74 each contribute to the NADP(+) site. Residue Asn-125 is glycosylated (N-linked (GlcNAc...) asparagine). Residues Arg-130 and Lys-139 each contribute to the NADP(+) site. Residue Ser-157 is the Proton donor of the active site. NADP(+) is bound by residues Val-202 and Thr-204.

This sequence belongs to the short-chain dehydrogenases/reductases (SDR) family. It depends on NADP(+) as a cofactor.

The protein localises to the membrane. It functions in the pathway mycotoxin biosynthesis. In terms of biological role, short-chain dehydrogenase/reductase; part of the gene cluster that mediates the biosynthesis of UCS1025A, a member of the pyrrolizidinone family that acts as a strong telomerase inhibitor and displays potent antibacterial and antitumor properties. These compounds share a hemiaminal-containing pyrrolizidinone core fused with a gamma-lactone, giving a furopyrrolizidine that is connected to a decalin fragment. The polyketide synthase module (PKS) of the PKS-NRPS ucsA is responsible for the synthesis of the polyketide backbone via the condensation of an acetyl-CoA starter unit with 6 malonyl-CoA units. The downstream nonribosomal peptide synthetase (NRPS) module then amidates the carboxyl end of the polyketide with a 2S,3S-methylproline derived from L-isoleucine by the 2-oxoglutarate-dependent dioxygenase ucsF which converts L-isoleucine to (4S,5S)-4-methylpyrroline-5-carboxylate that is further converted to 2S,3S-methylproline by the pyrroline-5-carboxylate reductase ucsG. Reductive release of the completed aminoacyl polyketide from the assembly line can form the 3-pyrrolin-2-one structure via an intramolecular Knoevenagel reaction. Because ucsA lacks a designated enoylreductase (ER) domain, the required activity is provided the enoyl reductase ucsL. This keto acyclic precursor is the substrate of the Diels-Alderase ucsH, that catalyzes the Diels-Alder cycloaddition. Oxidation of the 3S-methyl group to a carboxylate by the cytochrome P450 monooxygenase ucsK allows an oxa-Michael cyclization that might involve the reductase/dehydrogenase ucsI and which furnishes the furopyrrolizidine. The oxidase ucsJ likely plays a critical role in stereoselective reduction of the C5-C6 double bond to afford the required R-configured carboxylate group. Further enolization and oxidation at C5 by an unidentified enzyme affords the last intermediate that can undergo oxa-Michael cyclization to yield UCS1025A. The sequence is that of Short-chain dehydrogenase/reductase ucsE from Acremonium sp.